A 211-amino-acid chain; its full sequence is Small ribosomal subunit protein uS3 (211 aa).

One can recognise a KH type-2 domain in the interval 38 to 106 (LRSFVKKTFH…EVELHIVEVK (69 aa)).

The protein belongs to the universal ribosomal protein uS3 family. As to quaternary structure, part of the 30S ribosomal subunit. Forms a tight complex with proteins S10 and S14.

Binds the lower part of the 30S subunit head. Binds mRNA in the 70S ribosome, positioning it for translation. This is Small ribosomal subunit protein uS3 from Anaplasma phagocytophilum (strain HZ).